The following is a 549-amino-acid chain: Glucose-6-phosphate isomerase (549 aa).

Glu355 (proton donor) is an active-site residue. Active-site residues include His387 and Lys515.

Belongs to the GPI family.

Its subcellular location is the cytoplasm. It catalyses the reaction alpha-D-glucose 6-phosphate = beta-D-fructose 6-phosphate. Its pathway is carbohydrate biosynthesis; gluconeogenesis. The protein operates within carbohydrate degradation; glycolysis; D-glyceraldehyde 3-phosphate and glycerone phosphate from D-glucose: step 2/4. Functionally, catalyzes the reversible isomerization of glucose-6-phosphate to fructose-6-phosphate. This is Glucose-6-phosphate isomerase from Mannheimia succiniciproducens (strain KCTC 0769BP / MBEL55E).